A 442-amino-acid chain; its full sequence is C4-dicarboxylate transport protein 4 (442 aa).

6 helical membrane passes run 20-40 (ILYV…YFYP), 53-73 (FIAL…VHGI), 90-110 (LIYF…VGEV), 160-180 (GDLL…AFLG), 209-229 (PVGA…GSLL), and 233-253 (ALIG…LGAI).

The protein belongs to the dicarboxylate/amino acid:cation symporter (DAACS) (TC 2.A.23) family.

It is found in the cell inner membrane. Its function is as follows. Responsible for the transport of dicarboxylates such as succinate, fumarate, and malate from the periplasm across the membrane. In Bradyrhizobium diazoefficiens (strain JCM 10833 / BCRC 13528 / IAM 13628 / NBRC 14792 / USDA 110), this protein is C4-dicarboxylate transport protein 4.